The following is a 105-amino-acid chain: Guanidinium exporter (105 aa).

The helical transmembrane segment at 1–21 (MSWIILLIAGLLEVVWAVGLK) threads the bilayer. Over 22–28 (YTHGFSR) the chain is Cytoplasmic. A helical membrane pass occupies residues 29 to 49 (LTPSIITITAMVISMALLSWA). Over 50–57 (MKTLPVGT) the chain is Periplasmic. Residues 58–78 (AYAIWTGIGAVGAAITGILLL) form a helical membrane-spanning segment. The Cytoplasmic portion of the chain corresponds to 79-81 (GES). Residues 82-102 (ASPARLLSLGLIVAGIIGLKL) traverse the membrane as a helical segment. Residues 103–105 (SAH) lie on the Periplasmic side of the membrane.

It belongs to the drug/metabolite transporter (DMT) superfamily. Small multidrug resistance (SMR) (TC 2.A.7.1) family. Gdx/SugE subfamily.

Its subcellular location is the cell inner membrane. In terms of biological role, guanidinium ion exporter. Couples guanidinium export to the proton motive force, exchanging one guanidinium ion for two protons. The protein is Guanidinium exporter of Salmonella typhi.